We begin with the raw amino-acid sequence, 329 residues long: Glycerol-3-phosphate dehydrogenase [NAD(P)+] (329 aa).

2 residues coordinate NADPH: tryptophan 11 and lysine 101. Sn-glycerol 3-phosphate-binding residues include lysine 101, glycine 132, and serine 134. Residue alanine 136 participates in NADPH binding. 5 residues coordinate sn-glycerol 3-phosphate: lysine 188, aspartate 241, serine 251, arginine 252, and asparagine 253. Lysine 188 serves as the catalytic Proton acceptor. Arginine 252 provides a ligand contact to NADPH. NADPH is bound by residues valine 276 and glutamate 278.

It belongs to the NAD-dependent glycerol-3-phosphate dehydrogenase family.

The protein resides in the cytoplasm. It carries out the reaction sn-glycerol 3-phosphate + NAD(+) = dihydroxyacetone phosphate + NADH + H(+). It catalyses the reaction sn-glycerol 3-phosphate + NADP(+) = dihydroxyacetone phosphate + NADPH + H(+). Its pathway is membrane lipid metabolism; glycerophospholipid metabolism. In terms of biological role, catalyzes the reduction of the glycolytic intermediate dihydroxyacetone phosphate (DHAP) to sn-glycerol 3-phosphate (G3P), the key precursor for phospholipid synthesis. This chain is Glycerol-3-phosphate dehydrogenase [NAD(P)+], found in Phytoplasma australiense.